The primary structure comprises 326 residues: Chain length determinant protein (326 aa).

The Cytoplasmic portion of the chain corresponds to 1-31; that stretch reads MRVENNNVSGQNHDPEQIDLIDLLVQLWRGK. The helical transmembrane segment at 32–52 threads the bilayer; the sequence is MTIIISVIVAIALAIGYLAVA. Topologically, residues 53-295 are periplasmic; that stretch reads KEKWTSTAII…LPIRRDSPKK (243 aa). The chain crosses the membrane as a helical span at residues 296–316; it reads AITLILAVLLGGMVGAGIVLG. Topologically, residues 317 to 326 are cytoplasmic; sequence RNALRNYNAK.

This sequence belongs to the WzzB/Cld/Rol family. In terms of assembly, homodimer.

Its subcellular location is the cell inner membrane. The protein operates within bacterial outer membrane biogenesis; lipopolysaccharide biosynthesis. Its function is as follows. Confers a modal distribution of chain length on the O-antigen component of lipopolysaccharide (LPS). Gives rise to a reduced number of short chain molecules and increases in numbers of longer molecules. The chain is Chain length determinant protein (wzzB) from Escherichia coli (strain K12).